Here is a 543-residue protein sequence, read N- to C-terminus: MRHSLPYHILRKRPMKLSTTVILMVSAVLFSVLLVVHLIYFSQISDMTRDGLANKALAVARTLADSPEIRQGLQKKPQESGIQAIAEAVRKRNDLLFIVVTDMQSLRYSHPEAQRIGQPFKGDDILNALNGEENVAINRGFLAQALRVFTPIYDENHKQIGVVAIGLELSRVTQQINDSRWSIIWSVLFGMLVGLIGTCILVKVLKKILFGLEPYEISTLFEQRQAMLQSIKEGVVAVDDRGEVTLINDAAQELLNYRKSQDDEKLSTLSHSWSQVVDVSEVLRDGTPRRDEEITIKDRLLLINTVPVRSNGVIIGAISTFRDKTEVRKLMQRLDGLVNYADALRERSHEFMNKLHVILGLLHLKSYKQLEDYILKTANNYQEEIGSLLGKIKSPVIAGFLISKINRATDLGHTLILNSESQLPDSGSEDQVATLITTLGNLIENALEALGPEPGGEISVTLHYRHGWLHCEVNDDGPGIAPDKIDHIFDKGVSTKGSERGVGLALVKQQVENLGGSIAVESEPGIFTQFFVQIPWDGERSNR.

Topologically, residues methionine 1–threonine 20 are cytoplasmic. Residues valine 21–phenylalanine 41 form a helical membrane-spanning segment. Topologically, residues serine 42–tryptophan 181 are periplasmic. Residues arginine 107–histidine 110, lysine 121, glycine 140–leucine 142, and arginine 147 each bind (R)-malate. A helical transmembrane segment spans residues serine 182–valine 202. The Cytoplasmic portion of the chain corresponds to lysine 203–arginine 543. The region spanning leucine 212–aspartate 323 is the PAS domain. Residues glutamate 346–glycine 538 enclose the Histidine kinase domain. Position 349 is a phosphohistidine; by autocatalysis (histidine 349).

In terms of assembly, homodimer. Post-translationally, autophosphorylated. The phosphoryl group is rapidly transferred to DcuR.

The protein resides in the cell inner membrane. The catalysed reaction is ATP + protein L-histidine = ADP + protein N-phospho-L-histidine.. Functionally, member of the two-component regulatory system DcuR/DcuS. Involved in the C4-dicarboxylate-stimulated regulation of the genes encoding the anaerobic fumarate respiratory system (frdABCD; nuoAN; dcuB; sdhCDAB; etc.). Weakly regulates the aerobic C4-dicarboxylate transporter dctA. Activates DcuR by phosphorylation. The sequence is that of Sensor histidine kinase DcuS (dcuS) from Shigella flexneri.